Reading from the N-terminus, the 165-residue chain is Transcription elongation factor GreA (165 aa).

Residues 55–78 (AAKEEQGKQELRVRQLTQLLESAK) adopt a coiled-coil conformation.

The protein belongs to the GreA/GreB family.

Functionally, necessary for efficient RNA polymerase transcription elongation past template-encoded arresting sites. The arresting sites in DNA have the property of trapping a certain fraction of elongating RNA polymerases that pass through, resulting in locked ternary complexes. Cleavage of the nascent transcript by cleavage factors such as GreA or GreB allows the resumption of elongation from the new 3'terminus. GreA releases sequences of 2 to 3 nucleotides. In Streptomyces coelicolor (strain ATCC BAA-471 / A3(2) / M145), this protein is Transcription elongation factor GreA.